The sequence spans 163 residues: Olfactory marker protein (163 aa).

At alanine 2 the chain carries N-acetylalanine.

Belongs to the olfactory marker protein family. As to quaternary structure, interacts with BEX1 and BEX2. In terms of tissue distribution, uniquely associated with mature olfactory receptor neurons.

Its subcellular location is the cytoplasm. In terms of biological role, may act as a modulator of the olfactory signal-transduction cascade. This is Olfactory marker protein (Omp) from Rattus norvegicus (Rat).